A 191-amino-acid polypeptide reads, in one-letter code: uncharacterized protein (191 aa).

The N-terminal stretch at 1 to 22 (MKSLRLMLCAMPLMLTGCSTMS) is a signal peptide.

This is an uncharacterized protein from Escherichia coli (strain K12).